A 157-amino-acid chain; its full sequence is Ribosomal RNA large subunit methyltransferase H (157 aa).

S-adenosyl-L-methionine is bound by residues leucine 73, glycine 105, and 124–129 (MSKMTF).

Belongs to the RNA methyltransferase RlmH family. As to quaternary structure, homodimer.

The protein localises to the cytoplasm. It catalyses the reaction pseudouridine(1915) in 23S rRNA + S-adenosyl-L-methionine = N(3)-methylpseudouridine(1915) in 23S rRNA + S-adenosyl-L-homocysteine + H(+). Its function is as follows. Specifically methylates the pseudouridine at position 1915 (m3Psi1915) in 23S rRNA. This chain is Ribosomal RNA large subunit methyltransferase H, found in Bacteroides thetaiotaomicron (strain ATCC 29148 / DSM 2079 / JCM 5827 / CCUG 10774 / NCTC 10582 / VPI-5482 / E50).